A 66-amino-acid chain; its full sequence is DNA gyrase inhibitor YacG (66 aa).

4 residues coordinate Zn(2+): Cys9, Cys12, Cys28, and Cys32.

This sequence belongs to the DNA gyrase inhibitor YacG family. As to quaternary structure, interacts with GyrB. Zn(2+) is required as a cofactor.

Its function is as follows. Inhibits all the catalytic activities of DNA gyrase by preventing its interaction with DNA. Acts by binding directly to the C-terminal domain of GyrB, which probably disrupts DNA binding by the gyrase. This chain is DNA gyrase inhibitor YacG, found in Pseudomonas fluorescens (strain SBW25).